The following is a 359-amino-acid chain: Type-1 angiotensin II receptor (359 aa).

Residues methionine 1–asparagine 25 lie on the Extracellular side of the membrane. N-linked (GlcNAc...) (complex) asparagine glycosylation occurs at asparagine 4. Angiotensin II is bound by residues glutamine 15 and aspartate 17. 2 disulfides stabilise this stretch: cysteine 18–cysteine 274 and cysteine 101–cysteine 180. Residues tyrosine 26–phenylalanine 55 traverse the membrane as a helical segment. Residues tyrosine 56–threonine 61 are Cytoplasmic-facing. Residues valine 62 to alanine 89 traverse the membrane as a helical segment. At methionine 90–asparagine 98 the chain is on the extracellular side. A helical membrane pass occupies residues tyrosine 99–aspartate 125. Over arginine 126–threonine 141 the chain is Cytoplasmic. A helical membrane pass occupies residues methionine 142–isoleucine 165. At histidine 166–threonine 190 the chain is on the extracellular side. Residue arginine 167 participates in angiotensin II binding. A glycan (N-linked (GlcNAc...) asparagine) is linked at asparagine 176. Residues phenylalanine 182, histidine 183, and tyrosine 184 each contribute to the angiotensin II site. A glycan (N-linked (GlcNAc...) asparagine) is linked at asparagine 188. A helical transmembrane segment spans residues leucine 191–threonine 216. Residue lysine 199 participates in angiotensin II binding. Topologically, residues leucine 217–phenylalanine 239 are cytoplasmic. A helical transmembrane segment spans residues lysine 240–leucine 268. The Extracellular portion of the chain corresponds to glycine 269 to aspartate 278. Residues isoleucine 279–phenylalanine 304 traverse the membrane as a helical segment. The Cytoplasmic segment spans residues leucine 305–glutamate 359. The span at serine 335–lysine 350 shows a compositional bias: polar residues. Positions serine 335–glutamate 359 are disordered. Cysteine 355 carries S-palmitoyl cysteine lipidation.

This sequence belongs to the G-protein coupled receptor 1 family. Interacts with MAS1. Interacts with ARRB1. Interacts with FLNA (via filamin repeat 21); increases PKA-mediated phosphorylation of FLNA. C-terminal Ser or Thr residues may be phosphorylated. In terms of tissue distribution, liver, lung, adrenal and adrenocortical adenomas.

It localises to the cell membrane. Strongly inhibited by anti-hypertensive drugs losartan, candesartan, valsartan, irbesartan, telmisartan, eprosartan, olmesartan and azilsartan, most of which share a common biphenyl-tetrazole scaffold. Functionally, receptor for angiotensin II, a vasoconstricting peptide, which acts as a key regulator of blood pressure and sodium retention by the kidney. The activated receptor in turn couples to G-alpha proteins G(q) (GNAQ, GNA11, GNA14 or GNA15) and thus activates phospholipase C and increases the cytosolic Ca(2+) concentrations, which in turn triggers cellular responses such as stimulation of protein kinase C. In terms of biological role, (Microbial infection) During SARS coronavirus-2/SARS-CoV-2 infection, it is able to recognize and internalize the complex formed by secreted ACE2 and SARS-CoV-2 spike protein through DNM2/dynamin 2-dependent endocytosis. This is Type-1 angiotensin II receptor from Homo sapiens (Human).